The sequence spans 300 residues: 4-hydroxy-tetrahydrodipicolinate synthase (300 aa).

Thr-55 is a binding site for pyruvate. Tyr-143 serves as the catalytic Proton donor/acceptor. Lys-171 acts as the Schiff-base intermediate with substrate in catalysis. Position 211 (Ile-211) interacts with pyruvate.

It belongs to the DapA family. In terms of assembly, homotetramer; dimer of dimers.

The protein localises to the cytoplasm. It carries out the reaction L-aspartate 4-semialdehyde + pyruvate = (2S,4S)-4-hydroxy-2,3,4,5-tetrahydrodipicolinate + H2O + H(+). It participates in amino-acid biosynthesis; L-lysine biosynthesis via DAP pathway; (S)-tetrahydrodipicolinate from L-aspartate: step 3/4. Catalyzes the condensation of (S)-aspartate-beta-semialdehyde [(S)-ASA] and pyruvate to 4-hydroxy-tetrahydrodipicolinate (HTPA). The polypeptide is 4-hydroxy-tetrahydrodipicolinate synthase (Mycolicibacterium paratuberculosis (strain ATCC BAA-968 / K-10) (Mycobacterium paratuberculosis)).